A 575-amino-acid chain; its full sequence is Envelope glycoprotein (575 aa).

Residues 1 to 19 (MLCILILLLHPRLCPVTKG) form the signal peptide. The Extracellular segment spans residues 20–517 (GLGKPSGDIY…LTGLNGLLPY (498 aa)). Asn-126 and Asn-239 each carry an N-linked (GlcNAc...) asparagine; by host glycan. Positions 249 to 252 (CWLC) match the CXXC motif. 3 disulfides stabilise this stretch: Cys-249–Cys-252, Cys-249–Cys-475, and Cys-467–Cys-474. Residues Asn-266, Asn-271, Asn-302, Asn-316, Asn-322, and Asn-349 are each glycosylated (N-linked (GlcNAc...) asparagine; by host). The fusion peptide stretch occupies residues 390–410 (LIPLLVGLGVSTAVATGTAGL). 2 coiled-coil regions span residues 411–461 (GVAV…LLTA) and 471–507 (QERC…DNLF). Residues 450-466 (LQNRRGLDLLTAEQGGI) are immunosuppression. Positions 467-475 (CLALQERCC) match the CX6CC motif. Asn-479 carries N-linked (GlcNAc...) asparagine; by host glycosylation. A helical transmembrane segment spans residues 518-538 (LLPFLGPLFAIILFFSFAPWI). Residues 539–575 (LRRVTALIRDQLNSLLGKPIQIHYHQLATRDLEYGRL) lie on the Cytoplasmic side of the membrane. The YXXL motif; contains endocytosis signal signature appears at 562-565 (YHQL).

The mature envelope protein (Env) consists of a trimer of SU-TM heterodimers attached by a labile interchain disulfide bond. Post-translationally, specific enzymatic cleavages in vivo yield mature proteins. Envelope glycoproteins are synthesized as an inactive precursor that is N-glycosylated and processed likely by host cell furin or by a furin-like protease in the Golgi to yield the mature SU and TM proteins. The cleavage site between SU and TM requires the minimal sequence [KR]-X-[KR]-R. The CXXC motif is highly conserved across a broad range of retroviral envelope proteins. It is thought to participate in the formation of a labile disulfide bond possibly with the CX6CC motif present in the transmembrane protein. Isomerization of the intersubunit disulfide bond to an SU intrachain disulfide bond is thought to occur upon receptor recognition in order to allow membrane fusion.

It is found in the virion membrane. It localises to the host cell membrane. Its function is as follows. The surface protein (SU) attaches the virus to the host cell by binding to its receptor. This interaction triggers the refolding of the transmembrane protein (TM) and is thought to activate its fusogenic potential by unmasking its fusion peptide. Fusion occurs at the host cell plasma membrane. The transmembrane protein (TM) acts as a class I viral fusion protein. Under the current model, the protein has at least 3 conformational states: pre-fusion native state, pre-hairpin intermediate state, and post-fusion hairpin state. During viral and target cell membrane fusion, the coiled coil regions (heptad repeats) assume a trimer-of-hairpins structure, positioning the fusion peptide in close proximity to the C-terminal region of the ectodomain. The formation of this structure appears to drive apposition and subsequent fusion of viral and target cell membranes. Membranes fusion leads to delivery of the nucleocapsid into the cytoplasm. The polypeptide is Envelope glycoprotein (env) (Squirrel monkey retrovirus (SMRV-H)).